We begin with the raw amino-acid sequence, 229 residues long: C-&gt;U-editing enzyme APOBEC-1 (229 aa).

Positions 10–134 (VDPTLRRRIE…QRNRQGLRDL (125 aa)) constitute a CMP/dCMP-type deaminase domain. Position 61 (H61) interacts with Zn(2+). Residue E63 is the Proton donor of the active site. C93 and C96 together coordinate Zn(2+).

It belongs to the cytidine and deoxycytidylate deaminase family. As to quaternary structure, homodimer. Interacts with A1CF; form an mRNA editing complex. Interacts with RBM47; form an mRNA editing complex. Found in a complex with CELF2/CUGBP2 and A1CF. Interacts with HNRPAB. Interacts with SYNCRIP. It depends on Zn(2+) as a cofactor.

The protein localises to the cytoplasm. It is found in the nucleus. The catalysed reaction is a cytidine in mRNA + H2O + H(+) = a uridine in mRNA + NH4(+). It carries out the reaction cytidine(6666) in apoB mRNA + H2O + H(+) = uridine(6666) in apoB mRNA + NH4(+). Functionally, cytidine deaminase catalyzing the cytidine to uridine postranscriptional editing of a variety of mRNAs. Form complexes with cofactors that confer differential editing activity and selectivity. Responsible for the postranscriptional editing of a CAA codon for Gln to a UAA codon for stop in the apolipoprotein B mRNA. Also involved in CGA (Arg) to UGA (Stop) editing in the NF1 mRNA. May also play a role in the epigenetic regulation of gene expression by participating in DNA demethylation. This is C-&gt;U-editing enzyme APOBEC-1 from Mesocricetus auratus (Golden hamster).